We begin with the raw amino-acid sequence, 143 residues long: Sarcoplasmic/endoplasmic reticulum calcium ATPase (143 aa).

It belongs to the cation transport ATPase (P-type) (TC 3.A.3) family. Type IIA subfamily.

The protein resides in the endoplasmic reticulum membrane. It is found in the sarcoplasmic reticulum membrane. The enzyme catalyses Ca(2+)(in) + ATP + H2O = Ca(2+)(out) + ADP + phosphate + H(+). Its function is as follows. This magnesium-dependent enzyme catalyzes the hydrolysis of ATP coupled with the transport of calcium. Transports calcium ions from the cytosol into the sarcoplasmic/endoplasmic reticulum lumen. Contributes to calcium sequestration involved in muscular excitation/contraction. This is Sarcoplasmic/endoplasmic reticulum calcium ATPase from Chionoecetes opilio (Atlantic snow crab).